The primary structure comprises 100 residues: Urease subunit gamma (100 aa).

It belongs to the urease gamma subunit family. In terms of assembly, heterotrimer of UreA (gamma), UreB (beta) and UreC (alpha) subunits. Three heterotrimers associate to form the active enzyme.

The protein localises to the cytoplasm. The enzyme catalyses urea + 2 H2O + H(+) = hydrogencarbonate + 2 NH4(+). The protein operates within nitrogen metabolism; urea degradation; CO(2) and NH(3) from urea (urease route): step 1/1. The chain is Urease subunit gamma from Methylibium petroleiphilum (strain ATCC BAA-1232 / LMG 22953 / PM1).